Reading from the N-terminus, the 126-residue chain is Aspartate 1-decarboxylase (126 aa).

The Schiff-base intermediate with substrate; via pyruvic acid role is filled by serine 25. At serine 25 the chain carries Pyruvic acid (Ser). Position 57 (threonine 57) interacts with substrate. Tyrosine 58 functions as the Proton donor in the catalytic mechanism. 73 to 75 (GAA) lines the substrate pocket.

Belongs to the PanD family. As to quaternary structure, heterooctamer of four alpha and four beta subunits. The cofactor is pyruvate. Post-translationally, is synthesized initially as an inactive proenzyme, which is activated by self-cleavage at a specific serine bond to produce a beta-subunit with a hydroxyl group at its C-terminus and an alpha-subunit with a pyruvoyl group at its N-terminus.

It is found in the cytoplasm. The enzyme catalyses L-aspartate + H(+) = beta-alanine + CO2. It functions in the pathway cofactor biosynthesis; (R)-pantothenate biosynthesis; beta-alanine from L-aspartate: step 1/1. Functionally, catalyzes the pyruvoyl-dependent decarboxylation of aspartate to produce beta-alanine. This is Aspartate 1-decarboxylase from Proteus mirabilis (strain HI4320).